A 475-amino-acid chain; its full sequence is Aspartyl/glutamyl-tRNA(Asn/Gln) amidotransferase subunit B (475 aa).

It belongs to the GatB/GatE family. GatB subfamily. Heterotrimer of A, B and C subunits.

The catalysed reaction is L-glutamyl-tRNA(Gln) + L-glutamine + ATP + H2O = L-glutaminyl-tRNA(Gln) + L-glutamate + ADP + phosphate + H(+). It carries out the reaction L-aspartyl-tRNA(Asn) + L-glutamine + ATP + H2O = L-asparaginyl-tRNA(Asn) + L-glutamate + ADP + phosphate + 2 H(+). Functionally, allows the formation of correctly charged Asn-tRNA(Asn) or Gln-tRNA(Gln) through the transamidation of misacylated Asp-tRNA(Asn) or Glu-tRNA(Gln) in organisms which lack either or both of asparaginyl-tRNA or glutaminyl-tRNA synthetases. The reaction takes place in the presence of glutamine and ATP through an activated phospho-Asp-tRNA(Asn) or phospho-Glu-tRNA(Gln). This is Aspartyl/glutamyl-tRNA(Asn/Gln) amidotransferase subunit B from Helicobacter pylori (strain HPAG1).